Consider the following 286-residue polypeptide: ATP synthase gamma chain (286 aa).

This sequence belongs to the ATPase gamma chain family. F-type ATPases have 2 components, CF(1) - the catalytic core - and CF(0) - the membrane proton channel. CF(1) has five subunits: alpha(3), beta(3), gamma(1), delta(1), epsilon(1). CF(0) has three main subunits: a, b and c.

Its subcellular location is the cell inner membrane. In terms of biological role, produces ATP from ADP in the presence of a proton gradient across the membrane. The gamma chain is believed to be important in regulating ATPase activity and the flow of protons through the CF(0) complex. In Alcanivorax borkumensis (strain ATCC 700651 / DSM 11573 / NCIMB 13689 / SK2), this protein is ATP synthase gamma chain.